The chain runs to 381 residues: MSPFASESAWLCLAAAAVLGGTLLCGCRSGRQLRSQAVCLAGLWGGACLLSLSLLCTLFLLSVACFLLLYMSSSDQDLLPVDQKAVLVTGADSGFGHGLAKHLDKLGFTVFAGVLDKEGPGAEELRKHCSERLSVLQMDVTKPEQIKDAHSKVTEKIQDKGLWAVVNNAGVFHLPIDGELIPMSIYRKCMAVNFFGTVEVTKAFLPLLRKSKGRLVNVSSMGGTVPLQMTSAYAATKAALTMFSTIIRQELDKWGVKVVTIKPGGFKTNITGSQDIWDKMEKEILDHFSKDIQENYGQDYVHTQKLIIPTLKERSNPDITPVLRDIQHAISARNPSSFYYPGRMAYLWVCLAAYCPTSLLDYVIKKGFYPQPTPRALRTVH.

Residues 4 to 24 (FASESAWLCLAAAAVLGGTLL) traverse the membrane as a helical; Signal-anchor for type II membrane protein segment. Residue 83-112 (QKAVLVTGADSGFGHGLAKHLDKLGFTVFA) coordinates NAD(+). Serine 220 is a binding site for substrate. The active-site Proton acceptor is the tyrosine 233.

Belongs to the short-chain dehydrogenases/reductases (SDR) family. Homodimer.

The protein localises to the endoplasmic reticulum membrane. It catalyses the reaction 17beta-estradiol + NAD(+) = estrone + NADH + H(+). The catalysed reaction is testosterone + NAD(+) = androst-4-ene-3,17-dione + NADH + H(+). It carries out the reaction 17beta-hydroxy-5alpha-androstan-3-one + NAD(+) = 5alpha-androstan-3,17-dione + NADH + H(+). The enzyme catalyses (20S)-hydroxypregn-4-en-3-one + NAD(+) = progesterone + NADH + H(+). Functionally, catalyzes the NAD-dependent oxidation of highly active 17beta-hydroxysteroids, such as estradiol (E2), testosterone (T), and dihydrotestosterone (DHT), to their less active forms and thus regulates the biological potency of these steroids. Oxidizes estradiol to estrone, testosterone to androstenedione, and dihydrotestosterone to 5alpha-androstan-3,17-dione. Also has 20-alpha-HSD activity. This is Estradiol 17-beta-dehydrogenase 2 (Hsd17b2) from Mus musculus (Mouse).